Here is a 172-residue protein sequence, read N- to C-terminus: Translation initiation factor IF-3 (172 aa).

The protein belongs to the IF-3 family. Monomer.

The protein localises to the cytoplasm. IF-3 binds to the 30S ribosomal subunit and shifts the equilibrium between 70S ribosomes and their 50S and 30S subunits in favor of the free subunits, thus enhancing the availability of 30S subunits on which protein synthesis initiation begins. This Campylobacter fetus subsp. fetus (strain 82-40) protein is Translation initiation factor IF-3.